The sequence spans 341 residues: L-threonine 3-dehydrogenase (341 aa).

Cysteine 38 contacts Zn(2+). Residues threonine 40 and histidine 43 each act as charge relay system in the active site. Positions 63, 64, 93, 96, 99, and 107 each coordinate Zn(2+). Residues isoleucine 175, aspartate 195, arginine 200, 262–264 (LGI), and 286–287 (IY) contribute to the NAD(+) site.

This sequence belongs to the zinc-containing alcohol dehydrogenase family. As to quaternary structure, homotetramer. Zn(2+) is required as a cofactor.

The protein resides in the cytoplasm. It carries out the reaction L-threonine + NAD(+) = (2S)-2-amino-3-oxobutanoate + NADH + H(+). Its pathway is amino-acid degradation; L-threonine degradation via oxydo-reductase pathway; glycine from L-threonine: step 1/2. Functionally, catalyzes the NAD(+)-dependent oxidation of L-threonine to 2-amino-3-ketobutyrate. The polypeptide is L-threonine 3-dehydrogenase (Salmonella arizonae (strain ATCC BAA-731 / CDC346-86 / RSK2980)).